The chain runs to 486 residues: Cardiolipin synthase A (486 aa).

A run of 2 helical transmembrane segments spans residues 3–23 and 38–58; these read TFYT…IAGV and MAWL…YLSV. PLD phosphodiesterase domains follow at residues 219 to 246 and 399 to 426; these read MDLR…VDPR and EGGL…DMRS. Active-site residues include H224, K226, D231, H404, K406, and D411.

Belongs to the phospholipase D family. Cardiolipin synthase subfamily. ClsA sub-subfamily.

It localises to the cell inner membrane. The catalysed reaction is 2 a 1,2-diacyl-sn-glycero-3-phospho-(1'-sn-glycerol) = a cardiolipin + glycerol. Functionally, catalyzes the reversible phosphatidyl group transfer from one phosphatidylglycerol molecule to another to form cardiolipin (CL) (diphosphatidylglycerol) and glycerol. The polypeptide is Cardiolipin synthase A (Salmonella arizonae (strain ATCC BAA-731 / CDC346-86 / RSK2980)).